The following is a 327-amino-acid chain: cAMP-dependent protein kinase regulatory subunit (327 aa).

The disordered stretch occupies residues 1 to 47 (MTNNISHNQKATEKVEAQNNNNITRKRRGAISSEPLGDKPATPLPNI). A dimerization and phosphorylation region spans residues 1-65 (MTNNISHNQK…RLEQALSNNI (65 aa)). Residues 27–31 (RRGAI) carry the Pseudophosphorylation motif motif. Position 32 is a phosphoserine (Ser32). Residues 66–188 (MFSH…EKVS), Glu136, Arg145, 189–327 (ILRH…SQKS), Glu262, and Arg271 contribute to the 3',5'-cyclic AMP site.

The protein belongs to the cAMP-dependent kinase regulatory chain family. In Dictyostelium the holoenzyme is a dimer composed of a regulatory (R) and a catalytic (C) subunit. In the presence of cAMP it dissociates into the active C subunit and an R monomer. In other eukaryotes the holoenzyme is a tetramer composed of 2 regulatory (R) and 2 catalytic (C) subunits. In the presence of cAMP it dissociates into active monomeric C subunits and an R dimer. The pseudophosphorylation site binds to the substrate-binding region of the catalytic chain but is not phosphorylated. The physiological significance of phosphorylations by other kinases is unclear.

The protein is cAMP-dependent protein kinase regulatory subunit (pkaR) of Dictyostelium discoideum (Social amoeba).